The primary structure comprises 220 residues: Urease accessory protein UreG (220 aa).

18-25 contributes to the GTP binding site; the sequence is GPVGSGKT.

It belongs to the SIMIBI class G3E GTPase family. UreG subfamily. As to quaternary structure, homodimer. UreD, UreF and UreG form a complex that acts as a GTP-hydrolysis-dependent molecular chaperone, activating the urease apoprotein by helping to assemble the nickel containing metallocenter of UreC. The UreE protein probably delivers the nickel.

The protein localises to the cytoplasm. Facilitates the functional incorporation of the urease nickel metallocenter. This process requires GTP hydrolysis, probably effectuated by UreG. This is Urease accessory protein UreG from Yersinia pestis.